Consider the following 277-residue polypeptide: Large ribosomal subunit protein uL2 (277 aa).

The disordered stretch occupies residues 225–277; sequence MNPVDHPHGGGEGKTSGGRNSVTPWGVPTKGKKTRKRGKHSDKYIKVSSVRKR. Residues 254–264 are compositionally biased toward basic residues; sequence KGKKTRKRGKH.

The protein belongs to the universal ribosomal protein uL2 family. In terms of assembly, part of the 50S ribosomal subunit. Forms a bridge to the 30S subunit in the 70S ribosome.

Functionally, one of the primary rRNA binding proteins. Required for association of the 30S and 50S subunits to form the 70S ribosome, for tRNA binding and peptide bond formation. It has been suggested to have peptidyltransferase activity; this is somewhat controversial. Makes several contacts with the 16S rRNA in the 70S ribosome. This chain is Large ribosomal subunit protein uL2, found in Anaplasma marginale (strain Florida).